The chain runs to 250 residues: ATP synthase subunit a (250 aa).

6 helical membrane passes run 29–49 (ASLF…FATS), 84–104 (FFPL…LGMF), 114–134 (IIVT…YGFY), 143–163 (VFVP…IEII), 193–213 (FVAS…LPLI), and 216–236 (VALT…FAVL).

Belongs to the ATPase A chain family. F-type ATPases have 2 components, CF(1) - the catalytic core - and CF(0) - the membrane proton channel. CF(1) has five subunits: alpha(3), beta(3), gamma(1), delta(1), epsilon(1). CF(0) has three main subunits: a(1), b(2) and c(9-12). The alpha and beta chains form an alternating ring which encloses part of the gamma chain. CF(1) is attached to CF(0) by a central stalk formed by the gamma and epsilon chains, while a peripheral stalk is formed by the delta and b chains.

It is found in the cell inner membrane. In terms of biological role, key component of the proton channel; it plays a direct role in the translocation of protons across the membrane. This is ATP synthase subunit a from Rhizobium johnstonii (strain DSM 114642 / LMG 32736 / 3841) (Rhizobium leguminosarum bv. viciae).